A 198-amino-acid chain; its full sequence is Molybdenum cofactor guanylyltransferase (198 aa).

GTP is bound by residues 14–16 (LAG), lysine 27, aspartate 73, and aspartate 103. Residue aspartate 103 coordinates Mg(2+).

It belongs to the MobA family. Monomer. The cofactor is Mg(2+).

The protein resides in the cytoplasm. It catalyses the reaction Mo-molybdopterin + GTP + H(+) = Mo-molybdopterin guanine dinucleotide + diphosphate. Functionally, transfers a GMP moiety from GTP to Mo-molybdopterin (Mo-MPT) cofactor (Moco or molybdenum cofactor) to form Mo-molybdopterin guanine dinucleotide (Mo-MGD) cofactor. The sequence is that of Molybdenum cofactor guanylyltransferase from Pseudomonas aeruginosa (strain ATCC 15692 / DSM 22644 / CIP 104116 / JCM 14847 / LMG 12228 / 1C / PRS 101 / PAO1).